The sequence spans 125 residues: Protein ApaG (125 aa).

The ApaG domain maps to 3-125 (TAVTEGIEVT…FPLVVPGSLN (123 aa)).

This Anaeromyxobacter dehalogenans (strain 2CP-1 / ATCC BAA-258) protein is Protein ApaG.